A 314-amino-acid chain; its full sequence is uncharacterized protein (314 aa).

This is an uncharacterized protein from Methanocaldococcus jannaschii (strain ATCC 43067 / DSM 2661 / JAL-1 / JCM 10045 / NBRC 100440) (Methanococcus jannaschii).